We begin with the raw amino-acid sequence, 281 residues long: MKQFSAKYALILLATAGQALAASTQGISEDLYNRLVEMATISQAAYADLCNIPSTIIKGEKIYNAQTDINGWILRDDTSKEIITVFRGTGSDTNLQLDTNYTLTPFDTLPQCNDCEVHGGYYIGWISVQDQVESLVKQQASQYPDYALTVTGHSLGASMAALTAAQLSATYDNVRLYTFGEPRSGNQAFASYMNDAFQVSSPETTQYFRVTHSNDGIPNLPPADEGYAHGGVEYWSVDPYSAQNTFVCTGDEVQCCEAQGGQGVNDAHTTYFGMTSGACTW.

The first 21 residues, 1-21 (MKQFSAKYALILLATAGQALA), serve as a signal peptide directing secretion. 3 cysteine pairs are disulfide-bonded: cysteine 50-cysteine 279, cysteine 112-cysteine 115, and cysteine 248-cysteine 255. Aspartate 98 provides a ligand contact to substrate. Residue asparagine 100 is glycosylated (N-linked (GlcNAc...) asparagine). Residue tyrosine 101 coordinates substrate. The active-site Nucleophile is serine 154. Aspartate 215 (charge relay system) is an active-site residue. Histidine 268 provides a ligand contact to substrate. The active-site Charge relay system is the histidine 268.

Glycosylated.

It is found in the secreted. It catalyses the reaction feruloyl-polysaccharide + H2O = ferulate + polysaccharide.. Its activity is regulated as follows. Inhibited by the specific serine esterase inhibitor diisopropylfluorophosphate. Its function is as follows. Involved in degradation of plant cell walls. Hydrolyzes the feruloyl-arabinose ester bond in arabinoxylans, and the feruloyl-galactose ester bond in pectin. Binds to cellulose. The sequence is that of Feruloyl esterase A (faeA) from Aspergillus niger.